A 425-amino-acid polypeptide reads, in one-letter code: Protein disulfide isomerase-like 5-3 (425 aa).

A signal peptide spans 1–28 (MGKPTLPPVVVVVVLLLLVVVLPATTCG). Residues 29–153 (ADAGGGGEAE…LVENLKKLVA (125 aa)) enclose the Thioredoxin domain. Residues cysteine 75 and cysteine 78 each act as nucleophile in the active site. Residues cysteine 75 and cysteine 78 are joined by a disulfide bond. Residues 386–406 (LLGVNAVYILVFLVAVLVLLM) traverse the membrane as a helical segment.

The protein belongs to the protein disulfide isomerase family.

It localises to the membrane. Its function is as follows. Acts as a protein-folding catalyst that interacts with nascent polypeptides to catalyze the formation, isomerization, and reduction or oxidation of disulfide bonds. May play a role in storage protein biogenesis. The polypeptide is Protein disulfide isomerase-like 5-3 (PDIL5-3) (Oryza sativa subsp. japonica (Rice)).